Reading from the N-terminus, the 955-residue chain is Outer capsid protein VP2 (955 aa).

The protein belongs to the orbivirus VP2 family.

The protein localises to the virion. Functionally, the VP2 protein is one of the two proteins (with VP5) which constitute the virus particle outer capsid. It is the major target of the host immunogenic response. Responsible for viral attachment to target host cell, probably by binding to sialic acid. This attachment induces virion internalization predominantly through clathrin-dependent endocytosis. This chain is Outer capsid protein VP2 (Segment-2), found in Antilocapra americana (Pronghorn).